Reading from the N-terminus, the 496-residue chain is Probable cytosol aminopeptidase (496 aa).

Mn(2+)-binding residues include K262 and D267. Residue K274 is part of the active site. Mn(2+)-binding residues include D285, D344, and E346. Residue R348 is part of the active site.

It belongs to the peptidase M17 family. Mn(2+) serves as cofactor.

The protein localises to the cytoplasm. The enzyme catalyses Release of an N-terminal amino acid, Xaa-|-Yaa-, in which Xaa is preferably Leu, but may be other amino acids including Pro although not Arg or Lys, and Yaa may be Pro. Amino acid amides and methyl esters are also readily hydrolyzed, but rates on arylamides are exceedingly low.. The catalysed reaction is Release of an N-terminal amino acid, preferentially leucine, but not glutamic or aspartic acids.. In terms of biological role, presumably involved in the processing and regular turnover of intracellular proteins. Catalyzes the removal of unsubstituted N-terminal amino acids from various peptides. The sequence is that of Probable cytosol aminopeptidase from Rhizobium johnstonii (strain DSM 114642 / LMG 32736 / 3841) (Rhizobium leguminosarum bv. viciae).